Here is a 154-residue protein sequence, read N- to C-terminus: Myoglobin (154 aa).

One can recognise a Globin domain in the interval 2 to 148; the sequence is GLSDGEWQLV…FRNDMAAKYK (147 aa). Residue Ser-4 is modified to Phosphoserine. His-65 serves as a coordination point for nitrite. O2 is bound at residue His-65. Thr-68 is modified (phosphothreonine). His-94 serves as a coordination point for heme b.

It belongs to the globin family. In terms of assembly, monomeric.

It is found in the cytoplasm. The protein localises to the sarcoplasm. The catalysed reaction is Fe(III)-heme b-[protein] + nitric oxide + H2O = Fe(II)-heme b-[protein] + nitrite + 2 H(+). The enzyme catalyses H2O2 + AH2 = A + 2 H2O. In terms of biological role, monomeric heme protein which primary function is to store oxygen and facilitate its diffusion within muscle tissues. Reversibly binds oxygen through a pentacoordinated heme iron and enables its timely and efficient release as needed during periods of heightened demand. Depending on the oxidative conditions of tissues and cells, and in addition to its ability to bind oxygen, it also has a nitrite reductase activity whereby it regulates the production of bioactive nitric oxide. Under stress conditions, like hypoxia and anoxia, it also protects cells against reactive oxygen species thanks to its pseudoperoxidase activity. The sequence is that of Myoglobin (MB) from Ornithorhynchus anatinus (Duckbill platypus).